We begin with the raw amino-acid sequence, 272 residues long: Putative phosphoenolpyruvate synthase regulatory protein (272 aa).

152-159 (GVSRCGKT) serves as a coordination point for ADP.

It belongs to the pyruvate, phosphate/water dikinase regulatory protein family. PSRP subfamily.

The catalysed reaction is [pyruvate, water dikinase] + ADP = [pyruvate, water dikinase]-phosphate + AMP + H(+). It carries out the reaction [pyruvate, water dikinase]-phosphate + phosphate + H(+) = [pyruvate, water dikinase] + diphosphate. Bifunctional serine/threonine kinase and phosphorylase involved in the regulation of the phosphoenolpyruvate synthase (PEPS) by catalyzing its phosphorylation/dephosphorylation. The chain is Putative phosphoenolpyruvate synthase regulatory protein from Stutzerimonas stutzeri (strain A1501) (Pseudomonas stutzeri).